The primary structure comprises 369 residues: Homoserine O-acetyltransferase (369 aa).

Positions 44-350 constitute an AB hydrolase-1 domain; that stretch reads NAILVAHAWT…AYGHDAFLLE (307 aa). Residue Ser-150 is the Nucleophile of the active site. Arg-217 contributes to the substrate binding site. Active-site residues include Asp-311 and His-344. Asp-345 provides a ligand contact to substrate.

Belongs to the AB hydrolase superfamily. MetX family. Homodimer.

It localises to the cytoplasm. It carries out the reaction L-homoserine + acetyl-CoA = O-acetyl-L-homoserine + CoA. It participates in amino-acid biosynthesis; L-methionine biosynthesis via de novo pathway; O-acetyl-L-homoserine from L-homoserine: step 1/1. In terms of biological role, transfers an acetyl group from acetyl-CoA to L-homoserine, forming acetyl-L-homoserine. This Geobacter metallireducens (strain ATCC 53774 / DSM 7210 / GS-15) protein is Homoserine O-acetyltransferase.